We begin with the raw amino-acid sequence, 59 residues long: Putative antitoxin AF_1090 (59 aa).

The protein belongs to the UPF0165 family.

Its function is as follows. Possibly the antitoxin component of a type II toxin-antitoxin (TA) system. This is Putative antitoxin AF_1090 from Archaeoglobus fulgidus (strain ATCC 49558 / DSM 4304 / JCM 9628 / NBRC 100126 / VC-16).